The sequence spans 322 residues: Chemokine XC receptor 1 (322 aa).

The Extracellular portion of the chain corresponds to 1–27 (MESSTAFYDYHDKLSLLCENNVIFFST). The helical transmembrane segment at 28–55 (ISTIVLYSLVFLLSLVGNSLVLWVLVKY) threads the bilayer. Over 56–65 (ENLESLTNIF) the chain is Cytoplasmic. Residues 66-85 (ILNLCLSDLMFSCLLPVLIS) traverse the membrane as a helical segment. The Extracellular segment spans residues 86-98 (AQWSWFLGDFFCK). Cys97 and Cys170 form a disulfide bridge. The chain crosses the membrane as a helical span at residues 99-120 (FFNMIFGISLYSSIFFLTIMTI). Over 121–137 (HRYLSVVSPISTLGIHT) the chain is Cytoplasmic. The helical transmembrane segment at 138-162 (LRCRVLVTSCVWAASILFSIPDAVF) threads the bilayer. Residues 163-185 (HKVISLNCKYSEHHGFLASVYQH) lie on the Extracellular side of the membrane. A helical transmembrane segment spans residues 186 to 204 (NIFFLLSMGIILFCYVQIL). At 205-220 (RTLFRTRSRQRHRTVR) the chain is on the cytoplasmic side. Residues 221-243 (LIFTVVVAYFLSWAPYNLTLFLK) form a helical membrane-spanning segment. The Extracellular portion of the chain corresponds to 244 to 259 (TGIIQQSCESLQQLDI). The chain crosses the membrane as a helical span at residues 260–283 (AMIICRHLAFSHCCFNPVLYVFVG). Topologically, residues 284–322 (IKFRRHLKHLFQQVWLCRKTSSTVPCSPGTFTYEGPSFY) are cytoplasmic.

This sequence belongs to the G-protein coupled receptor 1 family. In terms of tissue distribution, expressed by dendritic cells from the thymus, slpeen, subcutaneous lymph nodes and mesenteric lymph nodes.

It localises to the cell membrane. In terms of biological role, receptor for chemokines SCYC1 and SCYC2. Subsequently transduces a signal by increasing the intracellular calcium ions level. Receptor for XCL1/Lymphotactin. The sequence is that of Chemokine XC receptor 1 (Xcr1) from Mus musculus (Mouse).